Consider the following 682-residue polypeptide: DNA-directed RNA polymerase subunit beta' (682 aa).

Positions 69, 71, 87, and 90 each coordinate Zn(2+). D491, D493, and D495 together coordinate Mg(2+).

This sequence belongs to the RNA polymerase beta' chain family. RpoC1 subfamily. In terms of assembly, in plastids the minimal PEP RNA polymerase catalytic core is composed of four subunits: alpha, beta, beta', and beta''. When a (nuclear-encoded) sigma factor is associated with the core the holoenzyme is formed, which can initiate transcription. It depends on Mg(2+) as a cofactor. Zn(2+) is required as a cofactor.

The protein resides in the plastid. It localises to the chloroplast. The catalysed reaction is RNA(n) + a ribonucleoside 5'-triphosphate = RNA(n+1) + diphosphate. In terms of biological role, DNA-dependent RNA polymerase catalyzes the transcription of DNA into RNA using the four ribonucleoside triphosphates as substrates. The protein is DNA-directed RNA polymerase subunit beta' of Lotus japonicus (Lotus corniculatus var. japonicus).